Consider the following 61-residue polypeptide: Small ribosomal subunit protein uS14 (61 aa).

Zn(2+) is bound by residues Cys24, Cys27, Cys40, and Cys43.

Belongs to the universal ribosomal protein uS14 family. Zinc-binding uS14 subfamily. As to quaternary structure, part of the 30S ribosomal subunit. Contacts proteins S3 and S10. Zn(2+) serves as cofactor.

Binds 16S rRNA, required for the assembly of 30S particles and may also be responsible for determining the conformation of the 16S rRNA at the A site. In Thermosipho melanesiensis (strain DSM 12029 / CIP 104789 / BI429), this protein is Small ribosomal subunit protein uS14.